The chain runs to 425 residues: Probable threonylcarbamoyladenosine tRNA methylthiotransferase (425 aa).

An MTTase N-terminal domain is found at 2 to 110 (VKIYIENYGC…IIQAVEYALR (109 aa)). [4Fe-4S] cluster-binding residues include Cys-11, Cys-47, Cys-76, Cys-148, Cys-152, and Cys-155. Residues 133-363 (LSPRTVYFIV…HRIRLQISYE (231 aa)) form the Radical SAM core domain. The region spanning 366 to 425 (QKYIGKKVEVLIHGEGKKGNVDAVTMNYKHVILPFGNSGEFRIAEIKNATSTYLLGEVMS) is the TRAM domain.

It belongs to the methylthiotransferase family. CDKAL1 subfamily. [4Fe-4S] cluster serves as cofactor.

The enzyme catalyses N(6)-L-threonylcarbamoyladenosine(37) in tRNA + (sulfur carrier)-SH + AH2 + 2 S-adenosyl-L-methionine = 2-methylsulfanyl-N(6)-L-threonylcarbamoyladenosine(37) in tRNA + (sulfur carrier)-H + 5'-deoxyadenosine + L-methionine + A + S-adenosyl-L-homocysteine + 2 H(+). Its function is as follows. Catalyzes the methylthiolation of N6-threonylcarbamoyladenosine (t(6)A), leading to the formation of 2-methylthio-N6-threonylcarbamoyladenosine (ms(2)t(6)A) at position 37 in tRNAs that read codons beginning with adenine. The polypeptide is Probable threonylcarbamoyladenosine tRNA methylthiotransferase (Pyrococcus abyssi (strain GE5 / Orsay)).